We begin with the raw amino-acid sequence, 105 residues long: Flower-specific defensin (105 aa).

A signal peptide spans 1-25 (MARSLCFMAFAILAMMLFVAYEVQA). 4 cysteine pairs are disulfide-bonded: C28/C72, C39/C59, C45/C66, and C49/C68. A propeptide spans 73-105 (VFDEKMTKTGAEILAEEAKTLAAALLEEEIMDN) (removed in mature form).

This sequence belongs to the DEFL family. As to expression, most abundant in the epidermal cell layers of the petals and sepals, within the connective cells of the anthers, and the cortical cells of the style. Not detected in the tapetum, pollen mother cells, the transmitting tissue, the vascular bundles of the anther and style or in leaves. Expressed also in ovaries, but barley detectable in roots.

The protein resides in the secreted. The protein localises to the vacuole. Plant defense peptide with antifungal activity against F.oxysporum and B.cinerea. Retards the growth of the Lepidopteran insect pests H.armigera and H.punctigera. The protein is Flower-specific defensin (D1) of Nicotiana alata (Winged tobacco).